Consider the following 172-residue polypeptide: Large ribosomal subunit protein uL10 (172 aa).

The protein belongs to the universal ribosomal protein uL10 family. In terms of assembly, part of the ribosomal stalk of the 50S ribosomal subunit. The N-terminus interacts with L11 and the large rRNA to form the base of the stalk. The C-terminus forms an elongated spine to which L12 dimers bind in a sequential fashion forming a multimeric L10(L12)X complex.

Functionally, forms part of the ribosomal stalk, playing a central role in the interaction of the ribosome with GTP-bound translation factors. This is Large ribosomal subunit protein uL10 from Rhodospirillum centenum (strain ATCC 51521 / SW).